A 303-amino-acid chain; its full sequence is MISAKSVKELRERTGAGMMDCKKALTETDGDIEKAVEVLREKGLAAAAKKSGRVAAEGLVKTYISEDKKSGAIVELNCETDFVAANEDFIAFADALAKIATSTSATTVEELVNEKFDSEATIQEALTGLIARLGENMTVRRFVKFAVDNGVVKSYIHGGGRIGVLVEVACDVESPAVEEVAKELCMQIAAANPLFLSKEEVDQDSIEKEKEIYRVQALNEGKPEKIVEKMVMGRIQKYYKEVCLLEQLWVKDGDKTITKFIDEKAKEAGSAIKVNRFVRFERGEGIEKVEENFAEEVAKQLGK.

Positions 80–83 (TDFV) are involved in Mg(2+) ion dislocation from EF-Tu.

It belongs to the EF-Ts family.

The protein localises to the cytoplasm. Associates with the EF-Tu.GDP complex and induces the exchange of GDP to GTP. It remains bound to the aminoacyl-tRNA.EF-Tu.GTP complex up to the GTP hydrolysis stage on the ribosome. This chain is Elongation factor Ts, found in Clostridium botulinum (strain Eklund 17B / Type B).